We begin with the raw amino-acid sequence, 434 residues long: 3-phosphoshikimate 1-carboxyvinyltransferase (434 aa).

The 3-phosphoshikimate site is built by lysine 15, serine 16, and arginine 20. Lysine 15 is a binding site for phosphoenolpyruvate. Residues glycine 96 and arginine 124 each contribute to the phosphoenolpyruvate site. Positions 169, 171, 195, 319, and 346 each coordinate 3-phosphoshikimate. Glutamine 171 contributes to the phosphoenolpyruvate binding site. Aspartate 319 acts as the Proton acceptor in catalysis. Phosphoenolpyruvate contacts are provided by arginine 350 and arginine 394.

It belongs to the EPSP synthase family. Monomer.

The protein localises to the cytoplasm. It carries out the reaction 3-phosphoshikimate + phosphoenolpyruvate = 5-O-(1-carboxyvinyl)-3-phosphoshikimate + phosphate. Its pathway is metabolic intermediate biosynthesis; chorismate biosynthesis; chorismate from D-erythrose 4-phosphate and phosphoenolpyruvate: step 6/7. Functionally, catalyzes the transfer of the enolpyruvyl moiety of phosphoenolpyruvate (PEP) to the 5-hydroxyl of shikimate-3-phosphate (S3P) to produce enolpyruvyl shikimate-3-phosphate and inorganic phosphate. This chain is 3-phosphoshikimate 1-carboxyvinyltransferase, found in Chlorobaculum parvum (strain DSM 263 / NCIMB 8327) (Chlorobium vibrioforme subsp. thiosulfatophilum).